We begin with the raw amino-acid sequence, 380 residues long: Cytochrome b (380 aa).

4 consecutive transmembrane segments (helical) span residues 34–54 (FGSL…LLAT), 78–99 (WLIR…YLHI), 114–134 (WNTG…GYVL), and 179–199 (FFAL…IHLT). 2 residues coordinate heme b: H84 and H98. H183 and H197 together coordinate heme b. An a ubiquinone-binding site is contributed by H202. The next 4 membrane-spanning stretches (helical) occupy residues 227–247 (LKDI…ALFS), 289–309 (LGGV…PLLH), 321–341 (LSQL…WVGS), and 348–368 (FIII…ILFP).

It belongs to the cytochrome b family. In terms of assembly, the cytochrome bc1 complex contains 11 subunits: 3 respiratory subunits (MT-CYB, CYC1 and UQCRFS1), 2 core proteins (UQCRC1 and UQCRC2) and 6 low-molecular weight proteins (UQCRH/QCR6, UQCRB/QCR7, UQCRQ/QCR8, UQCR10/QCR9, UQCR11/QCR10 and a cleavage product of UQCRFS1). This cytochrome bc1 complex then forms a dimer. It depends on heme b as a cofactor.

It localises to the mitochondrion inner membrane. Component of the ubiquinol-cytochrome c reductase complex (complex III or cytochrome b-c1 complex) that is part of the mitochondrial respiratory chain. The b-c1 complex mediates electron transfer from ubiquinol to cytochrome c. Contributes to the generation of a proton gradient across the mitochondrial membrane that is then used for ATP synthesis. In Ciconia ciconia (White stork), this protein is Cytochrome b (MT-CYB).